A 475-amino-acid chain; its full sequence is Ribulose bisphosphate carboxylase large chain (475 aa).

Positions 1–2 (MS) are excised as a propeptide. Proline 3 is modified (N-acetylproline). At lysine 14 the chain carries N6,N6,N6-trimethyllysine. Substrate is bound by residues asparagine 123 and threonine 173. Lysine 175 acts as the Proton acceptor in catalysis. Residue lysine 177 participates in substrate binding. Lysine 201, aspartate 203, and glutamate 204 together coordinate Mg(2+). Lysine 201 is modified (N6-carboxylysine). Residue histidine 294 is the Proton acceptor of the active site. Arginine 295, histidine 327, and serine 379 together coordinate substrate.

This sequence belongs to the RuBisCO large chain family. Type I subfamily. As to quaternary structure, heterohexadecamer of 8 large chains and 8 small chains. Mg(2+) serves as cofactor.

The protein localises to the plastid. The protein resides in the chloroplast. The catalysed reaction is 2 (2R)-3-phosphoglycerate + 2 H(+) = D-ribulose 1,5-bisphosphate + CO2 + H2O. It catalyses the reaction D-ribulose 1,5-bisphosphate + O2 = 2-phosphoglycolate + (2R)-3-phosphoglycerate + 2 H(+). RuBisCO catalyzes two reactions: the carboxylation of D-ribulose 1,5-bisphosphate, the primary event in carbon dioxide fixation, as well as the oxidative fragmentation of the pentose substrate in the photorespiration process. Both reactions occur simultaneously and in competition at the same active site. The polypeptide is Ribulose bisphosphate carboxylase large chain (Bazzania trilobata (Greater whipwort)).